Consider the following 364-residue polypeptide: MDSSRTIGLYFDSAHSSSNLLAFPIVLQDTGDGKKQIAPQYRIQRLDSWTDSKEDSVFITTYGFIFQVGNEEATVGMINDNPKRELLSAAMLCLGSVPNTGDLVELARACLTMVVTCKKSATNTERMVFSVVQAPQVLQSCRVVANKYSSVNAVKHVKAPEKIPGSGTLEYKVNFVSLTVVPKKDVYKIPTAVLKVSGSSLYNLALNVTINVEVDSRSPLVKSLSKSDSGYYANLFLHIGLMTTVDRRGKKVTFDKLEKKIRSLDLSVGLSDVLGPSVLVKARGARTKLLAPFFSSSGTACYPIANASPQVAKILWSQTACLRSVKIIIQAGTQRTVAVTADHEVTSTKLEKGHTLAKYNPFKK.

Positions 23–26 (FPIV) match the FPIV motif motif.

The protein belongs to the morbillivirus/respirovirus/rubulavirus M protein family.

It is found in the virion. Its function is as follows. The M protein has a crucial role in virus assembly and interacts with the RNP complex as well as with the viral membrane. This Newcastle disease virus (strain Beaudette C/45) (NDV) protein is Matrix protein (M).